A 463-amino-acid chain; its full sequence is L-seryl-tRNA(Sec) selenium transferase (463 aa).

At K295 the chain carries N6-(pyridoxal phosphate)lysine.

Belongs to the SelA family. As to quaternary structure, homodecamer; pentamer of dimers. Binds only one seryl-tRNA(Sec) per dimer. Pyridoxal 5'-phosphate serves as cofactor.

The protein localises to the cytoplasm. It catalyses the reaction L-seryl-tRNA(Sec) + selenophosphate + H(+) = L-selenocysteinyl-tRNA(Sec) + phosphate. It participates in aminoacyl-tRNA biosynthesis; selenocysteinyl-tRNA(Sec) biosynthesis; selenocysteinyl-tRNA(Sec) from L-seryl-tRNA(Sec) (bacterial route): step 1/1. Functionally, converts seryl-tRNA(Sec) to selenocysteinyl-tRNA(Sec) required for selenoprotein biosynthesis. In Shigella boydii serotype 4 (strain Sb227), this protein is L-seryl-tRNA(Sec) selenium transferase.